Here is a 90-residue protein sequence, read N- to C-terminus: MSQKSYLFNVKGKVQRVGFRFHTAHNALKLGLTGYARNQEDGSVEVLVCGSKDKINQFLEWLQVGPQLARVDSIKQEETQWQELTDFKMY.

The Acylphosphatase-like domain occupies 5 to 90 (SYLFNVKGKV…WQELTDFKMY (86 aa)). Catalysis depends on residues R20 and N38.

It belongs to the acylphosphatase family.

It catalyses the reaction an acyl phosphate + H2O = a carboxylate + phosphate + H(+). The polypeptide is Acylphosphatase (acyP) (Aliivibrio fischeri (strain ATCC 700601 / ES114) (Vibrio fischeri)).